The chain runs to 389 residues: Mesotocin receptor (389 aa).

Residues 1–50 (MEGLCLNLDCSELPNSSWVNSSMENQNHSSNSTRDPLKRNEEVAKVEVTV) lie on the Extracellular side of the membrane. N-linked (GlcNAc...) asparagine glycans are attached at residues Asn-15, Asn-20, Asn-27, and Asn-31. The chain crosses the membrane as a helical span at residues 51 to 71 (LALILFLALAGNICVLLGIYI). Residues 72 to 87 (NRHKHSRMYFFMKHLS) are Cytoplasmic-facing. The chain crosses the membrane as a helical span at residues 88–108 (IADLVVAIFQVLPQLIWDITF). The Extracellular segment spans residues 109–119 (RFYAPDLVCRL). The cysteines at positions 117 and 192 are disulfide-linked. A helical transmembrane segment spans residues 120 to 140 (VTYLQVVGMFASTYMLLLMSL). Residues 141–159 (DRCLAICQPLRSLHRRSDC) are Cytoplasmic-facing. Residues 160–180 (VYVLFTWILSFLLSTPQTVIF) traverse the membrane as a helical segment. Over 181–207 (SLTEVGNGVYDCRADFIQPWGPKAYIT) the chain is Extracellular. A helical transmembrane segment spans residues 208-228 (WITLAVYIIPVMILSVCYGLI). Residues 229-275 (SYKIWQNIRLKTVCESNLRLSTSRRATLSRVSSVRLISKAKIRTVKM) are Cytoplasmic-facing. Residues 276-296 (TFIIVLAYIVCWTPFFFVQMW) traverse the membrane as a helical segment. Residues 297–308 (SVWDPNPPKEAS) are Extracellular-facing. Residues 309–329 (LFIIAMLLGSLNSCCNPWIYM) traverse the membrane as a helical segment. Residues 330 to 389 (LFTGHLFHDLLQSFLCCSARYLKTQQQGSDLSASRKSNSSTFVLSRKSSSQKSITQPSTA) lie on the Cytoplasmic side of the membrane. A disordered region spans residues 360–389 (LSASRKSNSSTFVLSRKSSSQKSITQPSTA).

This sequence belongs to the G-protein coupled receptor 1 family. Vasopressin/oxytocin receptor subfamily. As to expression, highly expressed in the bladder. Also expressed in kidney, brain and skeletal muscle.

Its subcellular location is the cell membrane. Binds to mesotocin and may play a role in the regulation of water and salt transport. This chain is Mesotocin receptor, found in Rhinella marina (Cane toad).